Here is a 651-residue protein sequence, read N- to C-terminus: NADH oxidase (651 aa).

Residue Gln-104 participates in FMN binding. The active-site Proton donor is Tyr-175. FMN-binding positions include Arg-223 and 320-321 (GR). Positions 344, 347, 351, and 364 each coordinate [4Fe-4S] cluster. Residues Ala-396, Glu-415, Gln-423, Lys-433, and Ala-460 each contribute to the FAD site.

It in the N-terminal section; belongs to the NADH:flavin oxidoreductase/NADH oxidase family. Homohexamer. Requires FMN as cofactor. The cofactor is FAD. [4Fe-4S] cluster serves as cofactor. Post-translationally, the N-terminus is blocked.

It catalyses the reaction A + NADH + H(+) = AH2 + NAD(+). Reduces a range of alternative electron acceptors. This Thermoanaerobacter brockii (Thermoanaerobium brockii) protein is NADH oxidase.